The sequence spans 1032 residues: Putative oxidoreductase YgfK (1032 aa).

The region spanning 928-958 (RFQTLHLDAYCNECGNCAQFCPWNGKPYKDK) is the 4Fe-4S ferredoxin-type domain. [4Fe-4S] cluster is bound by residues cysteine 938, cysteine 941, cysteine 944, and cysteine 948.

It depends on [4Fe-4S] cluster as a cofactor.

Functionally, could be an iron-sulfur flavoprotein with NADPH:O(2) oxidoreductase activity. The polypeptide is Putative oxidoreductase YgfK (ygfK) (Escherichia coli (strain K12)).